The sequence spans 393 residues: S-adenosylmethionine synthase (393 aa).

Histidine 17 lines the ATP pocket. A Mg(2+)-binding site is contributed by aspartate 19. K(+) is bound at residue glutamate 45. L-methionine contacts are provided by glutamate 58 and glutamine 106. Residues 106–116 are flexible loop; that stretch reads QSAHIAQGVNA. ATP is bound by residues 171 to 173, 237 to 238, aspartate 246, 252 to 253, alanine 269, and lysine 273; these read DAK, KF, and RK. L-methionine is bound at residue aspartate 246. Lysine 277 serves as a coordination point for L-methionine.

Belongs to the AdoMet synthase family. Homotetramer; dimer of dimers. Mg(2+) is required as a cofactor. It depends on K(+) as a cofactor.

The protein resides in the cytoplasm. It catalyses the reaction L-methionine + ATP + H2O = S-adenosyl-L-methionine + phosphate + diphosphate. It participates in amino-acid biosynthesis; S-adenosyl-L-methionine biosynthesis; S-adenosyl-L-methionine from L-methionine: step 1/1. Functionally, catalyzes the formation of S-adenosylmethionine (AdoMet) from methionine and ATP. The overall synthetic reaction is composed of two sequential steps, AdoMet formation and the subsequent tripolyphosphate hydrolysis which occurs prior to release of AdoMet from the enzyme. The chain is S-adenosylmethionine synthase from Ruegeria pomeroyi (strain ATCC 700808 / DSM 15171 / DSS-3) (Silicibacter pomeroyi).